The following is a 185-amino-acid chain: Ribosome-recycling factor (185 aa).

The protein belongs to the RRF family.

Its subcellular location is the cytoplasm. In terms of biological role, responsible for the release of ribosomes from messenger RNA at the termination of protein biosynthesis. May increase the efficiency of translation by recycling ribosomes from one round of translation to another. This Pseudarthrobacter chlorophenolicus (strain ATCC 700700 / DSM 12829 / CIP 107037 / JCM 12360 / KCTC 9906 / NCIMB 13794 / A6) (Arthrobacter chlorophenolicus) protein is Ribosome-recycling factor.